Consider the following 280-residue polypeptide: Acyl-[acyl-carrier-protein]--UDP-N-acetylglucosamine O-acyltransferase (280 aa).

Belongs to the transferase hexapeptide repeat family. LpxA subfamily. Homotrimer.

The protein localises to the cytoplasm. The catalysed reaction is a (3R)-hydroxyacyl-[ACP] + UDP-N-acetyl-alpha-D-glucosamine = a UDP-3-O-[(3R)-3-hydroxyacyl]-N-acetyl-alpha-D-glucosamine + holo-[ACP]. It functions in the pathway glycolipid biosynthesis; lipid IV(A) biosynthesis; lipid IV(A) from (3R)-3-hydroxytetradecanoyl-[acyl-carrier-protein] and UDP-N-acetyl-alpha-D-glucosamine: step 1/6. In terms of biological role, involved in the biosynthesis of lipid A, a phosphorylated glycolipid that anchors the lipopolysaccharide to the outer membrane of the cell. This Chlamydia trachomatis serovar L2 (strain ATCC VR-902B / DSM 19102 / 434/Bu) protein is Acyl-[acyl-carrier-protein]--UDP-N-acetylglucosamine O-acyltransferase.